The following is a 444-amino-acid chain: Squalene synthase ERG9 (444 aa).

The helical transmembrane segment at 421–441 threads the bilayer; it reads FNMVLSIILSVLLGFYYIYTL.

The protein belongs to the phytoene/squalene synthase family. Requires Mg(2+) as cofactor.

It localises to the endoplasmic reticulum membrane. The protein resides in the microsome. It catalyses the reaction 2 (2E,6E)-farnesyl diphosphate + NADPH + H(+) = squalene + 2 diphosphate + NADP(+). The enzyme catalyses 2 (2E,6E)-farnesyl diphosphate + NADH + H(+) = squalene + 2 diphosphate + NAD(+). Its pathway is terpene metabolism; lanosterol biosynthesis; lanosterol from farnesyl diphosphate: step 1/3. Its function is as follows. Squalene synthase; part of the third module of ergosterol biosynthesis pathway that includes the late steps of the pathway. ERG9 produces squalene from 2 farnesyl pyrophosphate moieties. The third module or late pathway involves the ergosterol synthesis itself through consecutive reactions that mainly occur in the endoplasmic reticulum (ER) membrane. Firstly, the squalene synthase ERG9 catalyzes the condensation of 2 farnesyl pyrophosphate moieties to form squalene, which is the precursor of all steroids. Squalene synthase is crucial for balancing the incorporation of farnesyl diphosphate (FPP) into sterol and nonsterol isoprene synthesis. Secondly, the squalene epoxidase ERG1 catalyzes the stereospecific oxidation of squalene to (S)-2,3-epoxysqualene, which is considered to be a rate-limiting enzyme in steroid biosynthesis. Then, the lanosterol synthase ERG7 catalyzes the cyclization of (S)-2,3 oxidosqualene to lanosterol, a reaction that forms the sterol core. In the next steps, lanosterol is transformed to zymosterol through a complex process involving various demethylation, reduction and desaturation reactions. The lanosterol 14-alpha-demethylase ERG11 (also known as CYP51) catalyzes C14-demethylation of lanosterol to produce 4,4'-dimethyl cholesta-8,14,24-triene-3-beta-ol, which is critical for ergosterol biosynthesis. The C-14 reductase ERG24 reduces the C14=C15 double bond of 4,4-dimethyl-cholesta-8,14,24-trienol to produce 4,4-dimethyl-cholesta-8,24-dienol. 4,4-dimethyl-cholesta-8,24-dienol is substrate of the C-4 demethylation complex ERG25-ERG26-ERG27 in which ERG25 catalyzes the three-step monooxygenation required for the demethylation of 4,4-dimethyl and 4alpha-methylsterols, ERG26 catalyzes the oxidative decarboxylation that results in a reduction of the 3-beta-hydroxy group at the C-3 carbon to an oxo group, and ERG27 is responsible for the reduction of the keto group on the C-3. ERG28 has a role as a scaffold to help anchor ERG25, ERG26 and ERG27 to the endoplasmic reticulum and ERG29 regulates the activity of the iron-containing C4-methylsterol oxidase ERG25. Then, the sterol 24-C-methyltransferase ERG6 catalyzes the methyl transfer from S-adenosyl-methionine to the C-24 of zymosterol to form fecosterol. The C-8 sterol isomerase ERG2 catalyzes the reaction which results in unsaturation at C-7 in the B ring of sterols and thus converts fecosterol to episterol. The sterol-C5-desaturase ERG3 then catalyzes the introduction of a C-5 double bond in the B ring to produce 5-dehydroepisterol. The C-22 sterol desaturase ERG5 further converts 5-dehydroepisterol into ergosta-5,7,22,24(28)-tetraen-3beta-ol by forming the C-22(23) double bond in the sterol side chain. Finally, ergosta-5,7,22,24(28)-tetraen-3beta-ol is substrate of the C-24(28) sterol reductase ERG4 to produce ergosterol. This chain is Squalene synthase ERG9, found in Saccharomyces cerevisiae (strain ATCC 204508 / S288c) (Baker's yeast).